A 266-amino-acid chain; its full sequence is Integral membrane protein 2B (266 aa).

Residues M1–C54 lie on the Cytoplasmic side of the membrane. A helical; Signal-anchor for type II membrane protein membrane pass occupies residues W55–L75. Residues Y76–S266 are Lumenal-facing. The tract at residues E102–V134 is necessary for interaction with APP and inhibitor effects on APP processing. Residues F137–L231 enclose the BRICHOS domain. Disulfide bonds link C164–C223 and C248–C265. A glycan (N-linked (GlcNAc...) asparagine) is linked at N170.

It belongs to the ITM2 family. As to quaternary structure, homodimer; disulfide-linked. Interacts with SPPL2A and SPPL2B. Interacts with APP. Mature BRI2 (mBRI2) interacts with the APP amyloid-beta A4 protein; the interaction occurs at the cell surface and in the endocytic compartments and enable alpha- and beta-secretase-induced APP cleavage inhibition. Mature BRI2 (mBRI2) interacts with the APP C99; the interaction occurs in the endocytic compartments and enable gamma-secretase-induced C99 cleavage inhibition. May form heterodimers with Bri23 peptide and APP amyloid-beta protein 40. Interacts with ADAM7 in sperm; the interaction increases following capacitation. Post-translationally, the ectodomain C-terminal part of the imBRI2 is processed by furin producing a secreted Bri23 peptide and a mature BRI2, membrane form (mBRI2). The remaining part of the ectodomain of mBRI2 containing the BRICHOS domain is cleaved by ADAM10 and is secreted (BRI2C, soluble form). The membrane-bound N-terminal fragment (BRI2C, membrane form) is further proteolytically processed by SPPL2A and SPPL2B through regulated intramembrane proteolysis producing a secreted C-peptide and a BRI2 intracellular domain (BRI2 ICD) released in the cytosol. Shedding by ADAM10 facilitates intramembrane cleavage but is not absolutely required for BRI2 ICD generation. Glycosylation at Asn-170 is important for cell surface localization, but doesn't affect furin- and ADAM10-induced proteolytic processing.

Its subcellular location is the golgi apparatus membrane. The protein resides in the cell membrane. The protein localises to the endosome membrane. It is found in the secreted. Functionally, plays a regulatory role in the processing of the amyloid-beta A4 precursor protein (APP) and acts as an inhibitor of the amyloid-beta peptide aggregation and fibrils deposition. Plays a role in the induction of neurite outgrowth. Functions as a protease inhibitor by blocking access of secretases to APP cleavage sites. In terms of biological role, mature BRI2 (mBRI2) functions as a modulator of the amyloid-beta A4 precursor protein (APP) processing leading to a strong reduction in the secretion of secretase-processed amyloid-beta protein 40 and amyloid-beta protein 42. Bri23 peptide prevents aggregation of APP amyloid-beta protein 42 into toxic oligomers. This Rattus norvegicus (Rat) protein is Integral membrane protein 2B (Itm2b).